The sequence spans 322 residues: Exosome complex component RRP4 homolog (322 aa).

One can recognise an S1 motif domain in the interval 94 to 172; the sequence is GDIVVGRVIE…HDGSLQLQAR (79 aa). The region spanning 182 to 237 is the KH domain; sequence GQLLKVDPYLVKRSKHHFHYVESLGIDLIIGCNGFIWVGEHVEVRDPMAIDDQKDE.

Belongs to the RRP4 family. In terms of assembly, component of the RNA exosome complex. Interacts with RPP41. In terms of tissue distribution, expressed in roots, stems, rosette and cauline leaves, flowers and siliques.

Its subcellular location is the cytoplasm. The protein localises to the nucleus. It localises to the nucleolus. Non-catalytic component of the RNA exosome complex which has 3'-&gt;5' exoribonuclease activity and participates in a multitude of cellular RNA processing, maturation and degradation events. In vitro, is an active and distributive 3'-&gt;5' exonuclease requiring a free 3'-OH on the substrate and releasing nucleoside 5'-monophosphates. Required for normal embryo development. This chain is Exosome complex component RRP4 homolog, found in Arabidopsis thaliana (Mouse-ear cress).